Consider the following 141-residue polypeptide: Ribonuclease VapC2 (141 aa).

A PINc domain is found at 7–129; that stretch reads LIDKSALVRL…FDAIAALTGQ (123 aa). Mg(2+)-binding residues include Asp99, Asp117, and Asp119.

The protein belongs to the PINc/VapC protein family. As to quaternary structure, probably active as a homodimer. The cofactor is Mg(2+).

Its function is as follows. Toxic component of a type II toxin-antitoxin (TA) system. Acts as an RNase. All its toxic effects are neutralized by coexpression with cognate antitoxin VapB2. The chain is Ribonuclease VapC2 from Mycobacterium tuberculosis (strain CDC 1551 / Oshkosh).